Reading from the N-terminus, the 332-residue chain is MAEGRSSKNSPSGQIDIVQVDGLTVLKIIKHCEEEGSSGDLVQGVLLGLIQDNRLEITNCFPFPSNKAGDDEDDDDVNYQMEVMRRLRAVNIDHLHVGWYQSTYLGSYINRTLLDSQYSYQKSIEESVVLIYDPLRTSQGMLTLKAFRLSDEMMKLYKDGEFSADKLSKAGISFHSMFQEIPLVIKNSSLMNVLLCELDENTPTPSADQFLTLSTGSYLEKNVRVLMESVDELCQDSNKYHNYQRSVIRQQQQKENYLQRRQQENQSRIQRGEDPLPDEDLSKMFKPLPVPSRLDNLLLSEQVNTYCQHVHQFSTQSFGKFFLAQALQDKKE.

Positions 18 to 153 (VQVDGLTVLK…LKAFRLSDEM (136 aa)) constitute an MPN domain. Residues 251 to 285 (QQQKENYLQRRQQENQSRIQRGEDPLPDEDLSKMF) form a disordered region.

This sequence belongs to the eIF-3 subunit H family. In terms of assembly, component of the eukaryotic translation initiation factor 3 (eIF-3) complex.

It is found in the cytoplasm. Its function is as follows. Component of the eukaryotic translation initiation factor 3 (eIF-3) complex, which is involved in protein synthesis of a specialized repertoire of mRNAs and, together with other initiation factors, stimulates binding of mRNA and methionyl-tRNAi to the 40S ribosome. The eIF-3 complex specifically targets and initiates translation of a subset of mRNAs involved in cell proliferation. The chain is Eukaryotic translation initiation factor 3 subunit H from Nematostella vectensis (Starlet sea anemone).